We begin with the raw amino-acid sequence, 509 residues long: Maturase K (509 aa).

Belongs to the intron maturase 2 family. MatK subfamily.

The protein localises to the plastid. It localises to the chloroplast. Functionally, usually encoded in the trnK tRNA gene intron. Probably assists in splicing its own and other chloroplast group II introns. In Solanum tuberosum (Potato), this protein is Maturase K.